The chain runs to 157 residues: Fimbrial protein Q (157 aa).

Residues 1–6 constitute a propeptide that is removed on maturation; sequence MNAQKG. Phe7 is subject to N-methylphenylalanine. Cys136 and Cys155 are joined by a disulfide.

This sequence belongs to the N-Me-Phe pilin family. The pili are polar flexible filaments of about 5.4 nanometers diameter and 2.5 micrometers average length; they consist of only a single polypeptide chain arranged in a helical configuration of five subunits per turn in the assembled pilus.

It is found in the fimbrium. In Moraxella bovis, this protein is Fimbrial protein Q (tfpQ).